The primary structure comprises 270 residues: Phosphonoacetaldehyde hydrolase (270 aa).

Residue D11 is the Nucleophile of the active site. Mg(2+) contacts are provided by D11 and A13. K53 acts as the Schiff-base intermediate with substrate in catalysis. Residue D187 coordinates Mg(2+).

Belongs to the HAD-like hydrolase superfamily. PhnX family. As to quaternary structure, homodimer. Mg(2+) is required as a cofactor.

The enzyme catalyses phosphonoacetaldehyde + H2O = acetaldehyde + phosphate + H(+). Its function is as follows. Involved in phosphonate degradation. The sequence is that of Phosphonoacetaldehyde hydrolase from Salmonella gallinarum (strain 287/91 / NCTC 13346).